The sequence spans 446 residues: Protein odr-4 homolog (446 aa).

2 consecutive transmembrane segments (helical) span residues 81–101 (MLPGGLLVLSVFIIATPELSK) and 424–444 (MGVVIAVAVAVFASIFSFNYF).

Belongs to the ODR-4 family.

The protein localises to the membrane. In terms of biological role, may play a role in the trafficking of a subset of G-protein coupled receptors. This is Protein odr-4 homolog (ODR4) from Gallus gallus (Chicken).